A 127-amino-acid chain; its full sequence is Protein pkiA (127 aa).

One can recognise an HIT domain in the interval 16–127 (IFAKIISGAI…GGRQMNWPPG (112 aa)).

This is Protein pkiA (pkiA) from Dictyostelium discoideum (Social amoeba).